A 1350-amino-acid chain; its full sequence is Ubiquitin carboxyl-terminal hydrolase 47 (1350 aa).

A disordered region spans residues 111 to 138 (DGEQPQLTSDESGTADSSGLDDSSQEKF). A compositionally biased stretch (polar residues) spans 115 to 132 (PQLTSDESGTADSSGLDD). One can recognise a USP domain in the interval 173–548 (VGLVNQAMTC…NAYMLMYRLK (376 aa)). Cys182 functions as the Nucleophile in the catalytic mechanism. A disordered region spans residues 409–437 (EDEKSPQTDSCTDSGAENEGSCHSDQMSN). Over residues 415–437 (QTDSCTDSGAENEGSCHSDQMSN) the composition is skewed to polar residues. The active-site Proton acceptor is His487. 2 disordered regions span residues 815–836 (HPRP…PQED) and 859–1000 (SLQQ…ESGK). A compositionally biased stretch (polar residues) spans 859–877 (SLQQHQDGGNGDSSKSTEG). Basic and acidic residues predominate over residues 916–926 (PEERSDSDVNN). A compositionally biased stretch (low complexity) spans 929–945 (STSSVDSDILSSSHSSD). Positions 973 to 982 (KANDGKKETW) are enriched in basic and acidic residues. Residues 983-996 (DTAEEDSGTDSEYD) are compositionally biased toward acidic residues.

The protein belongs to the peptidase C19 family. USP47 subfamily.

It localises to the cytoplasm. It catalyses the reaction Thiol-dependent hydrolysis of ester, thioester, amide, peptide and isopeptide bonds formed by the C-terminal Gly of ubiquitin (a 76-residue protein attached to proteins as an intracellular targeting signal).. Ubiquitin-specific protease that specifically deubiquitinates monoubiquitinated DNA polymerase beta (polb), stabilizing polb thereby playing a role in base-excision repair (BER). This Xenopus laevis (African clawed frog) protein is Ubiquitin carboxyl-terminal hydrolase 47 (usp47).